Here is a 2898-residue protein sequence, read N- to C-terminus: Pericentrin (2898 aa).

The interval 1-117 (MEDEQEQRRR…QPPPPQTAHS (117 aa)) is disordered. Residues 34-44 (SKKKTAKRKGS) show a composition bias toward basic residues. Serine 44 bears the Phosphoserine mark. Coiled coils occupy residues 127–343 (LNNM…IRLL) and 382–434 (AQQQ…DSLE). Residues 429–460 (REDSLESTEISSSCVLPEETSGREGKEPPDPL) form a disordered region. Residues 448–457 (TSGREGKEPP) are compositionally biased toward basic and acidic residues. Coiled coils occupy residues 468-527 (KVQE…LREK), 611-696 (CALQ…LETH), 727-787 (VADV…SLRM), and 872-939 (SQDQ…LRRL). The residue at position 1022 (serine 1022) is a Phosphoserine. 3 coiled-coil regions span residues 1069-1383 (EREF…QENM), 1429-1482 (NEVV…SLMG), and 1529-1593 (QLLA…AKEA). Residue serine 1437 is modified to Phosphoserine. 3 disordered regions span residues 1745–1786 (VASR…DDVL), 1815–1880 (TQEK…PLTP), and 1958–1979 (TSPSHELARRSDGSRKSDGPDI). 2 stretches are compositionally biased toward polar residues: residues 1747 to 1766 (SRDTNSETCKLQQPNLSENG) and 1817 to 1834 (EKLTSQGGPFSSQASGHS). The tract at residues 1801 to 1822 (NQDLLVQVEMPDFPTQEKLTSQ) is interaction with CDK5RAP2. 4 positions are modified to phosphoserine: serine 1828, serine 1859, serine 1860, and serine 1959. Residues 1963 to 1976 (ELARRSDGSRKSDG) show a composition bias toward basic and acidic residues. Serine 1987 is subject to Phosphoserine. Residues 2046-2055 (SESQDPSSAL) are compositionally biased toward polar residues. Residues 2046 to 2088 (SESQDPSSALNKGEPRDPLDGFPRDSQALSEVTTDKGEKESLE) form a disordered region. 2 stretches are compositionally biased toward basic and acidic residues: residues 2058 to 2068 (GEPRDPLDGFP) and 2078 to 2088 (TTDKGEKESLE). Position 2128 is a phosphoserine (serine 2128). Coiled coils occupy residues 2211-2403 (KVEQ…EALQ) and 2429-2590 (HALL…ELSM). Disordered regions lie at residues 2509–2532 (VSGGNGPCRGSPGRGSLERDQFQE) and 2653–2684 (NRQSKSSLKQDGTDLQSSLRHSDPEWHSQTTS). An interaction with NEK2 region spans residues 2545 to 2810 (LCAAGLLTSF…SQRQRSPSGP (266 aa)). Residues 2653–2671 (NRQSKSSLKQDGTDLQSSL) are compositionally biased toward polar residues. The segment at 2758–2771 (KFRTAVRVVIAVLR) is calmodulin-binding. A disordered region spans residues 2787–2898 (ALVHPKSTRH…QKSCHQKIKQ (112 aa)). A compositionally biased stretch (basic residues) spans 2792–2802 (KSTRHGHRTSQ). Residues 2845–2860 (TSTPSSRLERSLTASQ) are compositionally biased toward polar residues. Positions 2861 to 2874 (DPEHSLTEYIHHLE) are enriched in basic and acidic residues. Serine 2865 is modified (phosphoserine).

In terms of assembly, interacts with DISC1 and PCM1. Binds calmodulin. Interacts with CEP131. Interacts with CDK5RAP2; the interaction is leading to centrosomal localization of PCNT and CDK5RAP2. Interacts with CHD3. Interacts with CHD4; the interaction regulates centrosome integrity. Interacts with NEK2. Interacts with CCDC13. Interacts with CEP68. Interacts with ATF5; the ATF5:PCNT:polyglutamylated tubulin (PGT) tripartite unites the mother centriole and the pericentriolar material (PCM) in the centrosome. In terms of processing, cleaved during mitotis which leads to removal of CDK5RAP2 from the centrosome and promotes centriole disengagement and subsequent centriole separation. The C-terminal fragment is rapidly degraded following cleavage. Ubiquitinated by TRIM43; leading to proteasomal degradation. In terms of tissue distribution, expressed in heart and lung (at protein level). Expressed in kidney, thymus, liver, brain, muscle, testis, spleen, lung and heart.

It is found in the cytoplasm. The protein localises to the cytoskeleton. It localises to the microtubule organizing center. Its subcellular location is the centrosome. Integral component of the filamentous matrix of the centrosome involved in the initial establishment of organized microtubule arrays in both mitosis and meiosis. Plays a role, together with DISC1, in the microtubule network formation. Is an integral component of the pericentriolar material (PCM). May play an important role in preventing premature centrosome splitting during interphase by inhibiting NEK2 kinase activity at the centrosome. This chain is Pericentrin (Pcnt), found in Mus musculus (Mouse).